Consider the following 274-residue polypeptide: Diaminopimelate epimerase (274 aa).

Substrate contacts are provided by N11, Q44, and N64. The active-site Proton donor is C73. Residues 74–75, N157, N190, and 208–209 each bind substrate; these read GN and ER. C217 functions as the Proton acceptor in the catalytic mechanism. 218-219 lines the substrate pocket; it reads GS.

This sequence belongs to the diaminopimelate epimerase family. In terms of assembly, homodimer.

It localises to the cytoplasm. It catalyses the reaction (2S,6S)-2,6-diaminopimelate = meso-2,6-diaminopimelate. It participates in amino-acid biosynthesis; L-lysine biosynthesis via DAP pathway; DL-2,6-diaminopimelate from LL-2,6-diaminopimelate: step 1/1. In terms of biological role, catalyzes the stereoinversion of LL-2,6-diaminopimelate (L,L-DAP) to meso-diaminopimelate (meso-DAP), a precursor of L-lysine and an essential component of the bacterial peptidoglycan. The polypeptide is Diaminopimelate epimerase (Serratia proteamaculans (strain 568)).